We begin with the raw amino-acid sequence, 386 residues long: Zinc finger protein 385A (386 aa).

The segment at 74 to 98 (ISCNICQIRFNSQSQAEAHYKGNRH) adopts a Matrin-type 1 zinc-finger fold. Residues 90 to 193 (EAHYKGNRHA…ASLPGGSKEE (104 aa)) form a disordered region. A compositionally biased stretch (basic and acidic residues) spans 103-121 (KGIEAAKTRGREPGVREPG). Residues 145-351 (NGLGPAPGSP…AGSPLSLRPA (207 aa)) are necessary for binding to ITPR1, CEBPA and p53/TP53 mRNAs. A Phosphoserine modification is found at Ser185. The Matrin-type 2 zinc-finger motif lies at 201–225 (LYCALCKVAVNSLSQLEAHNKGTKH). Thr248 carries the post-translational modification Phosphothreonine. Residues 261–285 (FHCEICNVKVNSEVQLKQHISSRRH) form a Matrin-type 3 zinc finger. The segment at 279 to 309 (HISSRRHRDGVAGKPNPLLSRHKKSRGAGEL) is disordered.

As to quaternary structure, interacts with ELAVL1; the interaction is indirect, mRNA-dependent and may regulate p53/TP53 expression. Interacts with p53/TP53; the interaction is direct and enhances p53/TP53 transactivation functions on cell-cycle arrest target genes, resulting in growth arrest. Ubiquitinated upon prolonged exposure to genotoxic stress, which leads to proteasomal degradation of ZNF385A and releases p53/TP53 from cell-cycle arrest target gene promoters. In terms of tissue distribution, expressed predominantly in the retina.

Its subcellular location is the cytoplasm. It is found in the nucleus. The protein localises to the nucleolus. It localises to the cell projection. The protein resides in the dendrite. Its function is as follows. RNA-binding protein that affects the localization and the translation of a subset of mRNA. May play a role in adipogenesis through binding to the 3'-UTR of CEBPA mRNA and regulation of its translation. Targets ITPR1 mRNA to dendrites in Purkinje cells, and may regulate its activity-dependent translation. With ELAVL1, binds the 3'-UTR of p53/TP53 mRNAs to control their nuclear export induced by CDKN2A. Hence, may regulate p53/TP53 expression and mediate in part the CDKN2A anti-proliferative activity. May also bind CCNB1 mRNA. Alternatively, may also regulate p53/TP53 activity through direct protein-protein interaction. Interacts with p53/TP53 and promotes cell-cycle arrest over apoptosis enhancing preferentially the DNA binding and transactivation of p53/TP53 on cell-cycle arrest target genes over proapoptotic target genes. May also regulate the ubiquitination and stability of CDKN1A promoting DNA damage-induced cell cycle arrest. Also plays a role in megakaryocytes differentiation. The polypeptide is Zinc finger protein 385A (ZNF385A) (Homo sapiens (Human)).